The sequence spans 181 residues: Shikimate kinase (181 aa).

Residue Gly17–Thr22 participates in ATP binding. Thr21 provides a ligand contact to Mg(2+). 3 residues coordinate substrate: Asp39, Arg63, and Gly85. Arg122 lines the ATP pocket. Substrate is bound at residue Arg141.

It belongs to the shikimate kinase family. Monomer. It depends on Mg(2+) as a cofactor.

Its subcellular location is the cytoplasm. It carries out the reaction shikimate + ATP = 3-phosphoshikimate + ADP + H(+). The protein operates within metabolic intermediate biosynthesis; chorismate biosynthesis; chorismate from D-erythrose 4-phosphate and phosphoenolpyruvate: step 5/7. In terms of biological role, catalyzes the specific phosphorylation of the 3-hydroxyl group of shikimic acid using ATP as a cosubstrate. This is Shikimate kinase from Nostoc sp. (strain PCC 7120 / SAG 25.82 / UTEX 2576).